We begin with the raw amino-acid sequence, 132 residues long: ATP synthase epsilon chain, chloroplastic (132 aa).

The protein belongs to the ATPase epsilon chain family. As to quaternary structure, F-type ATPases have 2 components, CF(1) - the catalytic core - and CF(0) - the membrane proton channel. CF(1) has five subunits: alpha(3), beta(3), gamma(1), delta(1), epsilon(1). CF(0) has three main subunits: a, b and c.

Its subcellular location is the plastid. It localises to the chloroplast thylakoid membrane. Produces ATP from ADP in the presence of a proton gradient across the membrane. In Coffea arabica (Arabian coffee), this protein is ATP synthase epsilon chain, chloroplastic.